A 478-amino-acid chain; its full sequence is Ribosomal RNA small subunit methyltransferase F (478 aa).

Residues 125 to 131 (AAAPGSK), glutamate 149, aspartate 176, and aspartate 194 contribute to the S-adenosyl-L-methionine site. Cysteine 247 functions as the Nucleophile in the catalytic mechanism.

Belongs to the class I-like SAM-binding methyltransferase superfamily. RsmB/NOP family.

It localises to the cytoplasm. The catalysed reaction is cytidine(1407) in 16S rRNA + S-adenosyl-L-methionine = 5-methylcytidine(1407) in 16S rRNA + S-adenosyl-L-homocysteine + H(+). Its function is as follows. Specifically methylates the cytosine at position 1407 (m5C1407) of 16S rRNA. The protein is Ribosomal RNA small subunit methyltransferase F of Serratia proteamaculans (strain 568).